Reading from the N-terminus, the 166-residue chain is DPIYAPVDLERHPYGTVLIPESTLETTGGTFGEMFLTSRGMISIPINDLARTMGITGTIDQSAITEEILRKFNQFVKPLLPLHIVFDGLTLYLSVVVNEHADMITLNEISDTEKAYCWFETSDTTSLTGVTSISAPITATPGGTIVKATPTFDRTRADDLLLDSDA.

The chain is Gene 16 protein (16) from Escherichia phage P1 (Bacteriophage P1).